Here is a 191-residue protein sequence, read N- to C-terminus: Imidazoleglycerol-phosphate dehydratase (191 aa).

Belongs to the imidazoleglycerol-phosphate dehydratase family.

It localises to the cytoplasm. The catalysed reaction is D-erythro-1-(imidazol-4-yl)glycerol 3-phosphate = 3-(imidazol-4-yl)-2-oxopropyl phosphate + H2O. Its pathway is amino-acid biosynthesis; L-histidine biosynthesis; L-histidine from 5-phospho-alpha-D-ribose 1-diphosphate: step 6/9. In Methanosarcina mazei (strain ATCC BAA-159 / DSM 3647 / Goe1 / Go1 / JCM 11833 / OCM 88) (Methanosarcina frisia), this protein is Imidazoleglycerol-phosphate dehydratase.